The sequence spans 217 residues: Peptide methionine sulfoxide reductase MsrA (217 aa).

The tract at residues 16–39 is disordered; the sequence is EALKGGRHPVLESPQPHTVLGTPI. Residue Cys56 is part of the active site.

The protein belongs to the MsrA Met sulfoxide reductase family.

The enzyme catalyses L-methionyl-[protein] + [thioredoxin]-disulfide + H2O = L-methionyl-(S)-S-oxide-[protein] + [thioredoxin]-dithiol. It carries out the reaction [thioredoxin]-disulfide + L-methionine + H2O = L-methionine (S)-S-oxide + [thioredoxin]-dithiol. Has an important function as a repair enzyme for proteins that have been inactivated by oxidation. Catalyzes the reversible oxidation-reduction of methionine sulfoxide in proteins to methionine. The protein is Peptide methionine sulfoxide reductase MsrA of Corynebacterium efficiens (strain DSM 44549 / YS-314 / AJ 12310 / JCM 11189 / NBRC 100395).